The following is a 354-amino-acid chain: Ion-translocating oxidoreductase complex subunit D (354 aa).

3 helical membrane-spanning segments follow: residues 9–28 (IMLH…LYLF), 67–87 (LLSG…WIAV), and 117–137 (VALL…LPLG). Residue threonine 165 is modified to FMN phosphoryl threonine. The next 5 membrane-spanning stretches (helical) occupy residues 200–220 (GSLG…LLAL), 222–242 (IIHW…AALA), 249–269 (VHGG…ALFI), 277–297 (PISR…VFVI), and 301–321 (GNFP…VPLI).

The protein belongs to the NqrB/RnfD family. As to quaternary structure, the complex is composed of six subunits: RnfA, RnfB, RnfC, RnfD, RnfE and RnfG. FMN is required as a cofactor.

The protein localises to the cell inner membrane. In terms of biological role, part of a membrane-bound complex that couples electron transfer with translocation of ions across the membrane. This chain is Ion-translocating oxidoreductase complex subunit D, found in Stutzerimonas stutzeri (Pseudomonas stutzeri).